A 124-amino-acid polypeptide reads, in one-letter code: MRHRKSGKQLNRNSSHRQAMFANMMVSLFHHERIVTTLPKAKELRRFAEPMITLAKEATVAKRRLAFSRLRDRQAVVKLFDDLGPHYLARPGGYLRIVKYGFRAGDNAPLAIVELVDRQTAAAE.

Belongs to the bacterial ribosomal protein bL17 family. Part of the 50S ribosomal subunit. Contacts protein L32.

The polypeptide is Large ribosomal subunit protein bL17 (Acidithiobacillus ferrooxidans (strain ATCC 23270 / DSM 14882 / CIP 104768 / NCIMB 8455) (Ferrobacillus ferrooxidans (strain ATCC 23270))).